The following is a 457-amino-acid chain: Probable cytosolic Fe-S cluster assembly factor oxy-4 (457 aa).

A [4Fe-4S] cluster-binding site is contributed by Cys25. Positions 38-59 are disordered; it reads KEESQVNIRTKKPKDKESSKTE. The [4Fe-4S] cluster site is built by Cys71, Cys74, Cys77, Cys176, Cys232, Cys380, and Cys384.

Belongs to the NARF family.

Component of the cytosolic iron-sulfur (Fe/S) protein assembly machinery. Required for maturation of extramitochondrial Fe/S proteins. This is Probable cytosolic Fe-S cluster assembly factor oxy-4 (oxy-4) from Caenorhabditis elegans.